The sequence spans 423 residues: Probable sucrose-phosphatase 3b (423 aa).

It belongs to the sucrose phosphatase family. In terms of assembly, homodimer. Mg(2+) is required as a cofactor.

The enzyme catalyses sucrose 6(F)-phosphate + H2O = sucrose + phosphate. Its pathway is glycan biosynthesis; sucrose biosynthesis; sucrose from D-fructose 6-phosphate and UDP-alpha-D-glucose: step 2/2. Its function is as follows. Catalyzes the final step of sucrose synthesis. The sequence is that of Probable sucrose-phosphatase 3b (SPP3B) from Arabidopsis thaliana (Mouse-ear cress).